A 139-amino-acid chain; its full sequence is Large-conductance mechanosensitive channel (139 aa).

The next 2 membrane-spanning stretches (helical) occupy residues 17-37 (VVDM…VTSL) and 88-108 (TVDF…IMAA).

The protein belongs to the MscL family. Homopentamer.

It localises to the cell inner membrane. Channel that opens in response to stretch forces in the membrane lipid bilayer. May participate in the regulation of osmotic pressure changes within the cell. This Porphyromonas gingivalis (strain ATCC 33277 / DSM 20709 / CIP 103683 / JCM 12257 / NCTC 11834 / 2561) protein is Large-conductance mechanosensitive channel.